Consider the following 70-residue polypeptide: Large ribosomal subunit protein eL38 (70 aa).

It belongs to the eukaryotic ribosomal protein eL38 family.

This is Large ribosomal subunit protein eL38 (RpL38) from Spodoptera frugiperda (Fall armyworm).